Consider the following 201-residue polypeptide: NADH-quinone oxidoreductase subunit B 1 (201 aa).

C80, C81, C145, and C175 together coordinate [4Fe-4S] cluster.

This sequence belongs to the complex I 20 kDa subunit family. In terms of assembly, NDH-1 is composed of 14 different subunits. Subunits NuoB, C, D, E, F, and G constitute the peripheral sector of the complex. Requires [4Fe-4S] cluster as cofactor.

Its subcellular location is the cell inner membrane. The catalysed reaction is a quinone + NADH + 5 H(+)(in) = a quinol + NAD(+) + 4 H(+)(out). NDH-1 shuttles electrons from NADH, via FMN and iron-sulfur (Fe-S) centers, to quinones in the respiratory chain. The immediate electron acceptor for the enzyme in this species is believed to be ubiquinone. Couples the redox reaction to proton translocation (for every two electrons transferred, four hydrogen ions are translocated across the cytoplasmic membrane), and thus conserves the redox energy in a proton gradient. The polypeptide is NADH-quinone oxidoreductase subunit B 1 (Rhodopseudomonas palustris (strain BisB18)).